The sequence spans 86 residues: Actinorhodin polyketide synthase acyl carrier protein (86 aa).

The Carrier domain maps to 4–82 (LLTTDDLRRA…ELLDLINGAL (79 aa)). Residue S42 is modified to O-(pantetheine 4'-phosphoryl)serine.

4'-phosphopantetheine is transferred from CoA to a specific serine of the apo-ACP-like protein.

The protein operates within antibiotic biosynthesis; actinorhodin biosynthesis. Its function is as follows. Acyl carrier protein. The protein is Actinorhodin polyketide synthase acyl carrier protein of Streptomyces coelicolor (strain ATCC BAA-471 / A3(2) / M145).